We begin with the raw amino-acid sequence, 321 residues long: Lipoyl synthase (321 aa).

Residues Cys60, Cys65, Cys71, Cys86, Cys90, Cys93, and Ser299 each coordinate [4Fe-4S] cluster. The 217-residue stretch at Trp72–Leu288 folds into the Radical SAM core domain.

It belongs to the radical SAM superfamily. Lipoyl synthase family. [4Fe-4S] cluster serves as cofactor.

The protein localises to the cytoplasm. It carries out the reaction [[Fe-S] cluster scaffold protein carrying a second [4Fe-4S](2+) cluster] + N(6)-octanoyl-L-lysyl-[protein] + 2 oxidized [2Fe-2S]-[ferredoxin] + 2 S-adenosyl-L-methionine + 4 H(+) = [[Fe-S] cluster scaffold protein] + N(6)-[(R)-dihydrolipoyl]-L-lysyl-[protein] + 4 Fe(3+) + 2 hydrogen sulfide + 2 5'-deoxyadenosine + 2 L-methionine + 2 reduced [2Fe-2S]-[ferredoxin]. It functions in the pathway protein modification; protein lipoylation via endogenous pathway; protein N(6)-(lipoyl)lysine from octanoyl-[acyl-carrier-protein]: step 2/2. Catalyzes the radical-mediated insertion of two sulfur atoms into the C-6 and C-8 positions of the octanoyl moiety bound to the lipoyl domains of lipoate-dependent enzymes, thereby converting the octanoylated domains into lipoylated derivatives. This chain is Lipoyl synthase, found in Mesorhizobium japonicum (strain LMG 29417 / CECT 9101 / MAFF 303099) (Mesorhizobium loti (strain MAFF 303099)).